Reading from the N-terminus, the 557-residue chain is Copine-6 (557 aa).

C2 domains follow at residues 1 to 127 (MSDP…TKPL) and 134 to 263 (NAGK…MQWD). Positions 167, 173, 229, 231, and 237 each coordinate Ca(2+). The segment at 244-303 (STFQEMQEGTANPGQEMQWDCINPKYRDKKKHYKSSGTVVLAQCTVEKVHTFLDYIMGGC) is linker region. Positions 306 to 526 (SFTVAIDFTA…ALAKCVLAEV (221 aa)) constitute a VWFA domain.

This sequence belongs to the copine family. As to quaternary structure, interacts (via second C2 domain) with OS9 (via C-terminus); this interaction occurs in a calcium-dependent manner in vitro. May interact with NECAB1. Ca(2+) serves as cofactor.

The protein localises to the cytoplasm. It localises to the cell membrane. Its subcellular location is the endosome. The protein resides in the cytoplasmic vesicle. It is found in the clathrin-coated vesicle. The protein localises to the perikaryon. It localises to the cell projection. Its subcellular location is the dendrite. In terms of biological role, calcium-dependent phospholipid-binding protein that plays a role in calcium-mediated intracellular processes. Binds phospholipid membranes in a calcium-dependent manner. Plays a role in dendrite formation by melanocytes. The protein is Copine-6 of Bos taurus (Bovine).